The chain runs to 360 residues: Protein Wnt-2 (360 aa).

Positions 1–25 (MNAPLGGIWLWLPLLLTWLTPEVSS) are cleaved as a signal peptide. 11 disulfides stabilise this stretch: Cys-76/Cys-87, Cys-127/Cys-135, Cys-137/Cys-157, Cys-206/Cys-220, Cys-208/Cys-215, Cys-278/Cys-309, Cys-294/Cys-304, Cys-308/Cys-348, Cys-324/Cys-339, Cys-326/Cys-336, and Cys-331/Cys-332. Ser-212 carries O-palmitoleoyl serine; by PORCN lipidation. Asn-295 carries an N-linked (GlcNAc...) asparagine glycan.

The protein belongs to the Wnt family. Post-translationally, palmitoleoylation is required for efficient binding to frizzled receptors. Depalmitoleoylation leads to Wnt signaling pathway inhibition.

The protein resides in the secreted. Its subcellular location is the extracellular space. The protein localises to the extracellular matrix. In terms of biological role, ligand for members of the frizzled family of seven transmembrane receptors. Functions in the canonical Wnt signaling pathway that results in activation of transcription factors of the TCF/LEF family. Functions as a upstream regulator of FGF10 expression. Plays an important role in embryonic lung development. May contribute to embryonic brain development by regulating the proliferation of dopaminergic precursors and neurons. This Equus caballus (Horse) protein is Protein Wnt-2 (WNT2).